The chain runs to 263 residues: Endolytic peptidoglycan transglycosylase RlpA (263 aa).

The N-terminal stretch at 1 to 16 is a signal peptide; it reads MNRIYLYLLIVLILAG. Cys17 carries N-palmitoyl cysteine lipidation. Cys17 carries S-diacylglycerol cysteine lipidation. One can recognise an SPOR domain in the interval 182-257; sequence KNNALEYVIQ…AGYDSAFIKT (76 aa).

The protein belongs to the RlpA family.

The protein localises to the cell membrane. Lytic transglycosylase with a strong preference for naked glycan strands that lack stem peptides. The protein is Endolytic peptidoglycan transglycosylase RlpA of Vibrio cholerae serotype O1 (strain ATCC 39315 / El Tor Inaba N16961).